A 143-amino-acid chain; its full sequence is Large-conductance mechanosensitive channel (143 aa).

A run of 3 helical transmembrane segments spans residues 21–41 (VGVI…ADII), 44–64 (VVGL…LGTV), and 86–106 (GNFI…FMMV).

It belongs to the MscL family. As to quaternary structure, homopentamer.

It is found in the cell inner membrane. Functionally, channel that opens in response to stretch forces in the membrane lipid bilayer. May participate in the regulation of osmotic pressure changes within the cell. This is Large-conductance mechanosensitive channel from Variovorax paradoxus (strain S110).